A 494-amino-acid polypeptide reads, in one-letter code: Nicotianamine aminotransferase 1 (494 aa).

Composition is skewed to low complexity over residues 24 to 38 (SGTSYPTRTTTTSSS) and 48 to 62 (STAMAPTTAAAAASS). Residues 24–76 (SGTSYPTRTTTTSSSAPEFTNKKQSTAMAPTTAAAAASSNGGGESDGSSKEWR) are disordered. K322 carries the N6-(pyridoxal phosphate)lysine modification.

The protein belongs to the class-I pyridoxal-phosphate-dependent aminotransferase family. It depends on pyridoxal 5'-phosphate as a cofactor. Expressed in companion and pericycle cells adjacent to the protoxylem of roots. Expressed in companion cells of shoots.

It catalyses the reaction nicotianamine + 2-oxoglutarate = 3''-deamino-3''-oxonicotianamine + L-glutamate. Functionally, involved in biosynthesis of mugineic acid family phytosiderophores, which are ferric iron chelators produced in graminaceous plants in response to iron deficiency. In Oryza sativa subsp. japonica (Rice), this protein is Nicotianamine aminotransferase 1.